Consider the following 330-residue polypeptide: Zinc finger protein sdz-12 (330 aa).

C2H2-type zinc fingers lie at residues 27 to 48, 63 to 85, 91 to 113, 120 to 144, and 153 to 176; these read PQCQ…HMKH, FRCE…QITH, KKCS…LHNH, FDCP…LVNH, and APCG…HFDH. The span at 183 to 195 shows a compositional bias: low complexity; sequence SAPAPTSSARLSP. Residues 183-203 form a disordered region; sequence SAPAPTSSARLSPITVSTSGS. Residues 271–293 form a C2H2-type 6 zinc finger; that stretch reads FECKHCTIKFHDATMSIMHNALH.

Belongs to the krueppel C2H2-type zinc-finger protein family. In terms of tissue distribution, expressed in the somatic gonad.

Together with ehn-3, may play a role in gonadogenesis. The sequence is that of Zinc finger protein sdz-12 from Caenorhabditis elegans.